Here is a 74-residue protein sequence, read N- to C-terminus: Cold shock-like protein CspD (74 aa).

Residues 4 to 64 (GTVKWFNNAK…GPKGNHASVI (61 aa)) form the CSD domain.

As to quaternary structure, homodimer.

The protein localises to the cytoplasm. Its function is as follows. Inhibits DNA replication at both initiation and elongation steps, most probably by binding to the opened, single-stranded regions at replication forks. Plays a regulatory role in chromosomal replication in nutrient-depleted cells. In Escherichia coli O157:H7, this protein is Cold shock-like protein CspD (cspD).